Reading from the N-terminus, the 470-residue chain is MVQPHVLLVTFPAQGHINPSLQFAKRLIEMGIEVTFTTSVFAHRRMAKIAASTAPKGLNLAAFSDGFDDGFKSNVDDSKRYMSEIRSRGSQTLRDVILKSSDEGRPVTSLVYTLLLPWAAEVARELHIPSALLWIQPATVLDIYYYYFNGYEDEMKCSSSNDPNWSIQLPRLPLLKSQDLPSFLVSSSSKDDKYSFALPTFKEQLDTLDGEENPKVLVNTFDALELEPLKAIEKYNLIGIGPLIPSSFLGGKDSLESSFGGDLFQKSNDDYMEWLNTKPKSSIVYISFGSLLNLSRNQKEEIAKGLIEIQRPFLWVIRDQEEEKEEEKLSCMMELEKQGKIVPWCSQLEVLTHPSLGCFVSHCGWNSTLESLSSGVPVVAFPHWTDQGTNAKLIEDVWKTGVRMRVNEDGVVESDEIKRCIEIVMDGGEKGEEMRKNAQKWKELARAAVKEGGSSEVNLKAFVLQVSKSC.

His-16 functions as the Proton acceptor in the catalytic mechanism. An an anthocyanidin-binding site is contributed by His-16. Residues Gln-347, His-362, Trp-365, Asn-366, Ser-367, Glu-370, Asp-386, and Gln-387 each coordinate UDP-alpha-D-glucose.

The protein belongs to the UDP-glycosyltransferase family. Expressed in flowers and fruits, especially in pulp, and, at lower levels, in seeds.

It is found in the cytoplasm. It localises to the nucleus. It carries out the reaction 2-cis-(+)-abscisate + UDP-alpha-D-glucose = beta-D-glucopyranosyl cis-(+)-abscisate + UDP. It catalyses the reaction (indol-3-yl)acetate + UDP-alpha-D-glucose = 1-O-(indol-3-ylacetyl)-beta-D-glucose + UDP. Functionally, glucosyltransferase acting on both abscisic acid (ABA) and auxin (IAA). Required for ABA-mediated fruit ripening, seed germination, and negative responses to drought. The sequence is that of UDP-glycosyltransferase 75C1 from Solanum lycopersicum (Tomato).